A 158-amino-acid polypeptide reads, in one-letter code: Phosphopantetheine adenylyltransferase (158 aa).

Substrate is bound at residue S8. Residues 8 to 9 and H16 contribute to the ATP site; that span reads SF. Substrate contacts are provided by K40, T72, and R86. Residues 87–89, E97, and 122–128 contribute to the ATP site; these read GLR and HSFLSSS.

Belongs to the bacterial CoaD family. Homohexamer. It depends on Mg(2+) as a cofactor.

It is found in the cytoplasm. The enzyme catalyses (R)-4'-phosphopantetheine + ATP + H(+) = 3'-dephospho-CoA + diphosphate. Its pathway is cofactor biosynthesis; coenzyme A biosynthesis; CoA from (R)-pantothenate: step 4/5. Functionally, reversibly transfers an adenylyl group from ATP to 4'-phosphopantetheine, yielding dephospho-CoA (dPCoA) and pyrophosphate. The chain is Phosphopantetheine adenylyltransferase from Prochlorococcus marinus (strain NATL2A).